A 417-amino-acid polypeptide reads, in one-letter code: Gelsolin (417 aa).

Residues Lys93–Leu171 form a Gelsolin-like 4 repeat. Positions 107, 108, 138, 150, 155, 157, 187, 227, 228, 250, 331, 332, and 354 each coordinate Ca(2+). 2 Gelsolin-like repeats span residues Arg213 to Leu261 and Ile316 to Ile392.

The protein belongs to the villin/gelsolin family.

The protein resides in the cytoplasm. The protein localises to the cytoskeleton. Its function is as follows. Calcium-regulated, actin-modulating protein that binds to the plus (or barbed) ends of actin monomers or filaments, preventing monomer exchange (end-blocking or capping). It can promote the assembly of monomers into filaments (nucleation) as well as sever filaments already formed. Plays a role in ciliogenesis. The polypeptide is Gelsolin (gsn) (Xenopus laevis (African clawed frog)).